A 488-amino-acid chain; its full sequence is Cobyric acid synthase (488 aa).

Positions 250 to 438 (DITIAIIRLP…LHGIFDNGSW (189 aa)) constitute a GATase cobBQ-type domain. Cys331 (nucleophile) is an active-site residue. Residue His430 is part of the active site.

The protein belongs to the CobB/CobQ family. CobQ subfamily.

It functions in the pathway cofactor biosynthesis; adenosylcobalamin biosynthesis. Functionally, catalyzes amidations at positions B, D, E, and G on adenosylcobyrinic A,C-diamide. NH(2) groups are provided by glutamine, and one molecule of ATP is hydrogenolyzed for each amidation. In Trichodesmium erythraeum (strain IMS101), this protein is Cobyric acid synthase.